The following is a 170-amino-acid chain: Pollen-specific protein C13 (170 aa).

Residues 1-27 form the signal peptide; that stretch reads MASVPAPATTTAAVILCLCVVLSCAAA. 3 disulfides stabilise this stretch: C43–C114, C46–C155, and C67–C102. The N-linked (GlcNAc...) asparagine glycan is linked to N53.

Belongs to the Ole e I family. In terms of tissue distribution, pollen.

This Zea mays (Maize) protein is Pollen-specific protein C13 (MGS1).